Reading from the N-terminus, the 219-residue chain is 2-C-methyl-D-erythritol 4-phosphate cytidylyltransferase (219 aa).

It belongs to the IspD/TarI cytidylyltransferase family. IspD subfamily.

The catalysed reaction is 2-C-methyl-D-erythritol 4-phosphate + CTP + H(+) = 4-CDP-2-C-methyl-D-erythritol + diphosphate. It functions in the pathway isoprenoid biosynthesis; isopentenyl diphosphate biosynthesis via DXP pathway; isopentenyl diphosphate from 1-deoxy-D-xylulose 5-phosphate: step 2/6. In terms of biological role, catalyzes the formation of 4-diphosphocytidyl-2-C-methyl-D-erythritol from CTP and 2-C-methyl-D-erythritol 4-phosphate (MEP). The protein is 2-C-methyl-D-erythritol 4-phosphate cytidylyltransferase of Chlamydia trachomatis serovar L2 (strain ATCC VR-902B / DSM 19102 / 434/Bu).